Consider the following 261-residue polypeptide: Glucose 1-dehydrogenase 1 (261 aa).

Position 11 to 35 (11 to 35) interacts with NADP(+); the sequence is VITGSSTGLGKAMAIRFATEKAKVV. Ser145 contacts substrate. Tyr158 (proton acceptor) is an active-site residue.

The protein belongs to the short-chain dehydrogenases/reductases (SDR) family. In terms of assembly, homotetramer.

The catalysed reaction is D-glucose + NAD(+) = D-glucono-1,5-lactone + NADH + H(+). It carries out the reaction D-glucose + NADP(+) = D-glucono-1,5-lactone + NADPH + H(+). May play some role in spore germination. In Priestia megaterium (Bacillus megaterium), this protein is Glucose 1-dehydrogenase 1 (gdhI).